We begin with the raw amino-acid sequence, 279 residues long: Putative F-box protein At1g50880 (279 aa).

One can recognise an F-box domain in the interval 19-69; sequence SSSMSSIPLDVTSKILAKLPAKSVLRARCVSKQWSSISTDPYFISNMFPKQ.

The polypeptide is Putative F-box protein At1g50880 (Arabidopsis thaliana (Mouse-ear cress)).